The following is a 557-amino-acid chain: Glucose-6-phosphate isomerase (557 aa).

E361 functions as the Proton donor in the catalytic mechanism. Residues H392 and K520 contribute to the active site.

The protein belongs to the GPI family.

The protein localises to the cytoplasm. It carries out the reaction alpha-D-glucose 6-phosphate = beta-D-fructose 6-phosphate. Its pathway is carbohydrate biosynthesis; gluconeogenesis. The protein operates within carbohydrate degradation; glycolysis; D-glyceraldehyde 3-phosphate and glycerone phosphate from D-glucose: step 2/4. Functionally, catalyzes the reversible isomerization of glucose-6-phosphate to fructose-6-phosphate. The chain is Glucose-6-phosphate isomerase from Acinetobacter venetianus (strain ATCC 31012 / DSM 23050 / BCRC 14357 / CCUG 45561 / CIP 110063 / KCTC 2702 / LMG 19082 / RAG-1).